We begin with the raw amino-acid sequence, 350 residues long: Cephaeline 6'-O-methyltransferase IpeOMT1 (350 aa).

5 residues coordinate S-adenosyl-L-methionine: Gly193, Asp216, Asp236, Met237, and Lys250. The active-site Proton acceptor is His254.

It belongs to the class I-like SAM-binding methyltransferase superfamily. Cation-independent O-methyltransferase family. Expressed in roots.

Its subcellular location is the cytoplasm. It is found in the cytosol. It catalyses the reaction cephaeline + S-adenosyl-L-methionine = emetine + S-adenosyl-L-homocysteine + H(+). The catalysed reaction is deacetylisoipecoside + S-adenosyl-L-methionine = 6-O-methyldeacetylisoipecoside + S-adenosyl-L-homocysteine + H(+). The enzyme catalyses 7-O-methyldeacetylisoipecoside + S-adenosyl-L-methionine = 6,7-O,O-dimethyldeacetylisoipecoside + S-adenosyl-L-homocysteine + H(+). It carries out the reaction norcoclaurine + S-adenosyl-L-methionine = coclaurine + S-adenosyl-L-homocysteine + H(+). It catalyses the reaction (S)-norprotosinomenine + S-adenosyl-L-methionine = (S)-6-O-methylnorprotosinomenine + S-adenosyl-L-homocysteine + H(+). The catalysed reaction is (R)-norprotosinomenine + S-adenosyl-L-methionine = (R)-6-O-methylnorprotosinomenine + S-adenosyl-L-homocysteine + H(+). It participates in alkaloid biosynthesis. Its function is as follows. O-methyltransferase involved in the biosynthesis of ipecac and benzylisoquinoline monoterpenoid-isoquinoline alkaloids natural products, starting by the condensation of dopamine and secologanin, and including emetine and cephaeline, drugs used both as anti-protozoal (e.g. treatment of ameobiasis) and as emetic agents. Mediates cephaeline 6'-O-methylation to produce emetine. Catalyzes the 6-O-methylation of N-deacetylisoipecoside, 7-O-methyl-N-deacetylisoipecoside, isococlaurine, norcoclaurine, (S)-norprotosinomenine and (R)-norprotosinomenine, and, with a lower efficiency, of 4'-O-methyllaudanosoline, isoorientaline and protosinomenine. Supports also the 4'-O-methylation of nororientaline. The sequence is that of Cephaeline 6'-O-methyltransferase IpeOMT1 from Carapichea ipecacuanha (Ipecac).